We begin with the raw amino-acid sequence, 508 residues long: GMP synthase [glutamine-hydrolyzing] (508 aa).

The Glutamine amidotransferase type-1 domain occupies 1–189 (MILVLDFGSQ…ALLVCGCEKT (189 aa)). Cys78 (nucleophile) is an active-site residue. Catalysis depends on residues His163 and Glu165. Residues 190-383 (WGMQHFAQRE…LGVSQDFLMR (194 aa)) form the GMPS ATP-PPase domain. Residue 217 to 223 (SGGVDST) coordinates ATP.

Homodimer.

The catalysed reaction is XMP + L-glutamine + ATP + H2O = GMP + L-glutamate + AMP + diphosphate + 2 H(+). It participates in purine metabolism; GMP biosynthesis; GMP from XMP (L-Gln route): step 1/1. Functionally, catalyzes the synthesis of GMP from XMP. This chain is GMP synthase [glutamine-hydrolyzing], found in Helicobacter pylori (strain P12).